A 468-amino-acid chain; its full sequence is Probable soluble pyridine nucleotide transhydrogenase (468 aa).

FAD is bound at residue 33–42 (ERGRMLGGVC).

It belongs to the class-I pyridine nucleotide-disulfide oxidoreductase family. It depends on FAD as a cofactor.

The protein localises to the cytoplasm. It carries out the reaction NAD(+) + NADPH = NADH + NADP(+). Conversion of NADPH, generated by peripheral catabolic pathways, to NADH, which can enter the respiratory chain for energy generation. This is Probable soluble pyridine nucleotide transhydrogenase (sthA) from Mycobacterium bovis (strain ATCC BAA-935 / AF2122/97).